A 200-amino-acid polypeptide reads, in one-letter code: Synaptobrevin homolog YKT6 (200 aa).

In terms of domain architecture, Longin spans 7-129 (GVFRSGGEKA…LKMKQLDTYI (123 aa)). In terms of domain architecture, v-SNARE coiled-coil homology spans 140-200 (AIMKVQQELD…KKSNSCCIIM (61 aa)). Position 158 is a phosphothreonine (Thr158). The S-palmitoyl cysteine moiety is linked to residue Cys196. Cysteine methyl ester is present on Cys197. The S-farnesyl cysteine moiety is linked to residue Cys197. A propeptide spans 198-200 (IIM) (removed in mature form).

It belongs to the synaptobrevin family.

Its subcellular location is the cell membrane. This Saccharomyces cerevisiae (strain ATCC 204508 / S288c) (Baker's yeast) protein is Synaptobrevin homolog YKT6 (YKT6).